The sequence spans 186 residues: DNA-directed RNA polymerase 22 kDa subunit (186 aa).

The protein belongs to the poxviridae DNA-directed RNA polymerase 22 kDa subunit family. The DNA-dependent RNA polymerase used for intermediate and late genes expression consists of eight subunits Rpo30/OPG66, Rpo7/OPG90, Rpo22/OPG103, Rpo147/OPG105, Rpo18/OPG119, Rpo19/OPG131, Rpo132/OPG151 and Rpo35/OPG156. The same holoenzyme, with the addition of the transcription-specificity factor OPG109, is used for early gene expression.

It is found in the virion. The enzyme catalyses RNA(n) + a ribonucleoside 5'-triphosphate = RNA(n+1) + diphosphate. Part of the DNA-dependent RNA polymerase which catalyzes the transcription of viral DNA into RNA using the four ribonucleoside triphosphates as substrates. Responsible for the transcription of early, intermediate and late genes. DNA-dependent RNA polymerase associates with the early transcription factor (ETF), itself composed of OPG118 and OPG133, thereby allowing the early genes transcription. Late transcription, and probably also intermediate transcription, require newly synthesized RNA polymerase. In Vertebrata (FPV), this protein is DNA-directed RNA polymerase 22 kDa subunit (OPG103).